The sequence spans 79 residues: Small ribosomal subunit protein bS18 (79 aa).

Belongs to the bacterial ribosomal protein bS18 family. Part of the 30S ribosomal subunit. Forms a tight heterodimer with protein bS6.

In terms of biological role, binds as a heterodimer with protein bS6 to the central domain of the 16S rRNA, where it helps stabilize the platform of the 30S subunit. This is Small ribosomal subunit protein bS18 from Aster yellows witches'-broom phytoplasma (strain AYWB).